Here is a 182-residue protein sequence, read N- to C-terminus: Isopentenyl-diphosphate Delta-isomerase (182 aa).

The Mn(2+) site is built by His-25 and His-32. The 135-residue stretch at 30–164 (LLHLAFSSWL…PWAFSPWMVM (135 aa)) folds into the Nudix hydrolase domain. The active site involves Cys-67. Cys-67 lines the Mg(2+) pocket. His-69 serves as a coordination point for Mn(2+). A Mg(2+)-binding site is contributed by Glu-87. Mn(2+) is bound by residues Glu-114 and Glu-116. Glu-116 is an active-site residue.

Belongs to the IPP isomerase type 1 family. Homodimer. It depends on Mg(2+) as a cofactor. The cofactor is Mn(2+).

Its subcellular location is the cytoplasm. It carries out the reaction isopentenyl diphosphate = dimethylallyl diphosphate. It functions in the pathway isoprenoid biosynthesis; dimethylallyl diphosphate biosynthesis; dimethylallyl diphosphate from isopentenyl diphosphate: step 1/1. Its function is as follows. Catalyzes the 1,3-allylic rearrangement of the homoallylic substrate isopentenyl (IPP) to its highly electrophilic allylic isomer, dimethylallyl diphosphate (DMAPP). The sequence is that of Isopentenyl-diphosphate Delta-isomerase from Escherichia coli O6:H1 (strain CFT073 / ATCC 700928 / UPEC).